Consider the following 493-residue polypeptide: Cytochrome c-552 (493 aa).

Positions 1 to 25 (MEKKLKSWQGWLLFCGAMAVVFVLG) are cleaved as a signal peptide. Residue H116 coordinates heme c. 3 residues coordinate heme: C144, C147, and K148. C182, C185, H186, C224, C227, and H228 together coordinate heme c. 4 residues coordinate Ca(2+): E230, Y231, K276, and Q278. Position 231 (Y231) interacts with substrate. H279 contacts substrate. Residues H290, C297, C300, H301, H315, C328, C331, H332, and H407 each contribute to the heme c site.

The protein belongs to the cytochrome c-552 family. Ca(2+) serves as cofactor. Requires heme c as cofactor.

It is found in the periplasm. The catalysed reaction is 6 Fe(III)-[cytochrome c] + NH4(+) + 2 H2O = 6 Fe(II)-[cytochrome c] + nitrite + 8 H(+). The protein operates within nitrogen metabolism; nitrate reduction (assimilation). Catalyzes the reduction of nitrite to ammonia, consuming six electrons in the process. This Bacteroides fragilis (strain ATCC 25285 / DSM 2151 / CCUG 4856 / JCM 11019 / LMG 10263 / NCTC 9343 / Onslow / VPI 2553 / EN-2) protein is Cytochrome c-552.